Here is a 345-residue protein sequence, read N- to C-terminus: Phenylalanine--tRNA ligase alpha subunit (345 aa).

Glu-259 serves as a coordination point for Mg(2+).

The protein belongs to the class-II aminoacyl-tRNA synthetase family. Phe-tRNA synthetase alpha subunit type 1 subfamily. As to quaternary structure, tetramer of two alpha and two beta subunits. Requires Mg(2+) as cofactor.

The protein resides in the cytoplasm. It catalyses the reaction tRNA(Phe) + L-phenylalanine + ATP = L-phenylalanyl-tRNA(Phe) + AMP + diphosphate + H(+). This chain is Phenylalanine--tRNA ligase alpha subunit, found in Nitrosomonas europaea (strain ATCC 19718 / CIP 103999 / KCTC 2705 / NBRC 14298).